A 2202-amino-acid polypeptide reads, in one-letter code: Activating signal cointegrator 1 complex subunit 3 (2202 aa).

Positions 1–400 (MALPRLTGAL…RQRDADVEKI (400 aa)) are required for interaction with ASCC2. Residue serine 12 is modified to Phosphoserine. Coiled-coil stretches lie at residues 18–79 (KQDN…AAKQ) and 328–356 (IQSEQEKQLMKQYRREEKRIARREKKAGE). The Helicase ATP-binding 1 domain maps to 486–669 (ETAYNTNENM…FLHVNPYIGL (184 aa)). 499–506 (APTGAGKT) contacts ATP. Lysine 572 is subject to N6-acetyllysine. The DEVH box motif lies at 611–614 (DEVH). The Helicase C-terminal 1 domain maps to 728-914 (TVRTAMSLIE…GTVTNVEEAV (187 aa)). Residues 978–1287 (STDLGRTASH…GAEAVCIINF (310 aa)) form the SEC63 1 domain. The Helicase ATP-binding 2 domain occupies 1336-1511 (HTLYHTDCNV…WLNIKQMGLF (176 aa)). 1349-1356 (APTGSGKT) lines the ATP pocket. A DEIH box motif is present at residues 1453–1456 (DEIH). Positions 1544-1739 (PAFQAIRSHS…VLSDHLNAEI (196 aa)) constitute a Helicase C-terminal 2 domain. Positions 1812-2176 (PLTYGRIASY…LGLDQQYDIY (365 aa)) constitute an SEC63 2 domain. Residue serine 2195 is modified to Phosphoserine.

This sequence belongs to the helicase family. As to quaternary structure, identified in the ASCC complex that contains ASCC1, ASCC2 and ASCC3. Functions as scaffolding subunit that interacts directly with both ASCC1 and ASCC2. Interacts directly with ALKBH3, and thereby recruits ALKBH3 to the ASCC complex. Part of the ASC-1/TRIP4 complex, that contains TRIP4, ASCC1, ASCC2 and ASCC3. Part of the RQT (ribosome quality control trigger) complex, that contains ASCC2, ASCC3 and TRIP4. Associates with ribosomes; recruited to collided ribosomes. Interacts with ZCCHC4. Interacts with ZNF598. Interacts with RPS3. Ubiquitous.

It localises to the nucleus. It is found in the nucleus speckle. The protein localises to the cytoplasm. Its subcellular location is the cytosol. It carries out the reaction Couples ATP hydrolysis with the unwinding of duplex DNA by translocating in the 3'-5' direction.. It catalyses the reaction ATP + H2O = ADP + phosphate + H(+). In terms of biological role, ATPase involved both in DNA repair and rescue of stalled ribosomes. 3'-5' DNA helicase involved in repair of alkylated DNA: promotes DNA unwinding to generate single-stranded substrate needed for ALKBH3, enabling ALKBH3 to process alkylated N3-methylcytosine (3mC) within double-stranded regions. Also involved in activation of the ribosome quality control (RQC) pathway, a pathway that degrades nascent peptide chains during problematic translation. Drives the splitting of stalled ribosomes that are ubiquitinated in a ZNF598-dependent manner, as part of the ribosome quality control trigger (RQT) complex. Part of the ASC-1 complex that enhances NF-kappa-B, SRF and AP1 transactivation. The sequence is that of Activating signal cointegrator 1 complex subunit 3 (ASCC3) from Homo sapiens (Human).